The following is an 879-amino-acid chain: Metabotropic glutamate receptor 3 (879 aa).

The first 24 residues, 1-24 (MKMLTRLQVLTLALFSKGFLLSLG), serve as a signal peptide directing secretion. The Extracellular segment spans residues 25-577 (DHNFLRREIK…DYIRWEDAWA (553 aa)). A disulfide bond links cysteine 57 and cysteine 99. Residues serine 151 and 172–174 (AST) each bind L-glutamate. The N-linked (GlcNAc...) asparagine glycan is linked to asparagine 209. Tyrosine 222 contributes to the L-glutamate binding site. 7 disulfide bridges follow: cysteine 240–cysteine 527, cysteine 361–cysteine 373, cysteine 412–cysteine 419, cysteine 509–cysteine 528, cysteine 513–cysteine 531, cysteine 534–cysteine 546, and cysteine 549–cysteine 562. The N-linked (GlcNAc...) asparagine glycan is linked to asparagine 292. L-glutamate is bound at residue aspartate 301. L-glutamate is bound at residue lysine 389. Residues asparagine 414 and asparagine 439 are each glycosylated (N-linked (GlcNAc...) asparagine). A helical membrane pass occupies residues 578–598 (IGPVTIACLGFMCTCMVITVF). The Cytoplasmic portion of the chain corresponds to 599–613 (IKHNNTPLVKASGRE). Residues 614–634 (LCYILLFGVGLSYCMTFFFIA) traverse the membrane as a helical segment. The Extracellular segment spans residues 635–688 (KPSPVICALRRLGLGSSFAICYSALLTKTNCIARIFDGVKNGAQRPKFISPSSQ). The helical transmembrane segment at 689 to 709 (VFICLGLILVQIVMVSVWLIL) threads the bilayer. Over 710–735 (EAPGTRRYTLAEKRETVILKCNVKDS) the chain is Cytoplasmic. Residues 736–756 (SMLISLTYDVILVILCTVYAF) traverse the membrane as a helical segment. The Extracellular portion of the chain corresponds to 757-769 (KTRKCPENFNEAK). The helical transmembrane segment at 770 to 790 (FIGFTMYTTCIIWLAFLPIFY) threads the bilayer. The Cytoplasmic portion of the chain corresponds to 791-807 (VTSSDYRVQTTTMCISV). Residues 808–828 (SLSGFVVLGCLFAPKVHIILF) form a helical membrane-spanning segment. The Extracellular segment spans residues 829-879 (QPQKNVVTHRLHLNRFSVSGTGTTYSQSSASMYVPTVCNGREVLDSTTSSL).

The protein belongs to the G-protein coupled receptor 3 family. In terms of assembly, interacts with TAMALIN.

It is found in the cell membrane. Its function is as follows. G-protein coupled receptor for glutamate. Ligand binding causes a conformation change that triggers signaling via guanine nucleotide-binding proteins (G proteins) and modulates the activity of down-stream effectors. Signaling inhibits adenylate cyclase activity. The chain is Metabotropic glutamate receptor 3 (GRM3) from Macaca fascicularis (Crab-eating macaque).